A 208-amino-acid chain; its full sequence is MSNLQEQLIALGGVFQAAVLVDRIARTGQASEANIGCMLGSLLVRDPKDTLEVFGGDDLNLRDGYRALIGALERDPNSLQREPLRYALSMLGLERQLNKRGDLLDTIGNRLPQIQSQAEHFGLVHENVIASSGALYQDTLSTLRQRIQVHGDMRFLQQPNNASKIRALLLAGIRAARLWRQLGGHRWQLVFSRRKLLNELYDMMRSPN.

This sequence belongs to the HflD family.

Its subcellular location is the cytoplasm. The protein resides in the cell inner membrane. The polypeptide is High frequency lysogenization protein HflD homolog (Pseudomonas putida (strain ATCC 700007 / DSM 6899 / JCM 31910 / BCRC 17059 / LMG 24140 / F1)).